The following is a 173-amino-acid chain: Ribulose bisphosphate carboxylase small subunit, chloroplastic 3 (173 aa).

Residues 1 to 49 constitute a chloroplast transit peptide; that stretch reads MASIPATVATVAQANMVAPFTGLKSNAAFPVTKKVNDFSTLPSNGGRVQ.

Belongs to the RuBisCO small chain family. As to quaternary structure, heterohexadecamer of 8 large and 8 small subunits.

The protein resides in the plastid. It localises to the chloroplast. Functionally, ruBisCO catalyzes two reactions: the carboxylation of D-ribulose 1,5-bisphosphate, the primary event in carbon dioxide fixation, as well as the oxidative fragmentation of the pentose substrate. Both reactions occur simultaneously and in competition at the same active site. Although the small subunit is not catalytic it is essential for maximal activity. The chain is Ribulose bisphosphate carboxylase small subunit, chloroplastic 3 from Flaveria pringlei.